We begin with the raw amino-acid sequence, 322 residues long: Helix-loop-helix 34 (322 aa).

Basic and acidic residues predominate over residues 1-11 (METNLSEEKQK). Residues 1-23 (METNLSEEKQKPSKSQAQQRRQM) are disordered. A bHLH domain is found at 8–62 (EKQKPSKSQAQQRRQMENYEFSQLANELPLARAISGQHIDKTTMVRLATAYIKLH). PAS domains lie at 82–152 (DSLW…DLNW) and 203–276 (PTPV…FNLG).

In terms of assembly, efficient DNA binding requires dimerization with another bHLH protein. In terms of tissue distribution, expressed in a small subset of neurons, probably AVJL and AVJR. Expressed in the AVH neurons.

Its subcellular location is the nucleus. Its function is as follows. Transcription factor. Involved in specifying AVH neuron identity, acting in concert with unc-42. Involved in serotonin-mediated feeding behavior, probably acting by modulating expression of genes involved in glutamate signaling. This is Helix-loop-helix 34 (hlh-34) from Caenorhabditis elegans.